Consider the following 759-residue polypeptide: TIR domain-containing adapter molecule 1 (759 aa).

The interval 1-153 is TRIF-NTD; it reads MACTGPSLSG…CGWDVLGDLG (153 aa). The TRAF6-binding motif lies at 84-91; sequence ETPEEPPD. The short motif at 207-210 is the pLxIS motif element; sequence LEIS. Serine 210 carries the phosphoserine modification. Lysine 229 participates in a covalent cross-link: Glycyl lysine isopeptide (Lys-Gly) (interchain with G-Cter in ubiquitin). Residues 241-296 form a disordered region; sequence EPAPMGCQEPEEMSWPPSVEAADSPVRPSSPGPGLPEVTTDACPASPHDPPEVPEI. Short sequence motifs (TRAF6-binding) lie at residues 248 to 255 and 299 to 309; these read QEPEEMSW and HYPVECTDVPA. The interval 340-426 is disordered; it reads LSAQPRPPTP…PEPPPPELES (87 aa). Residues 351–365 are compositionally biased toward low complexity; sequence VPQTSPSFPSASTSP. Residues 366-376 are compositionally biased toward pro residues; that stretch reads FPSPSTPPEAH. Positions 430-590 constitute a TIR domain; it reads KFYNFVVLHA…QDARALREQS (161 aa). The tract at residues 549–759 is sufficient to induce apoptosis; the sequence is LLDEHSKIFA…APEDNTRETE (211 aa). The segment at 642–723 is disordered; that stretch reads GQGSLGTPPS…PPARPQSPGL (82 aa). Over residues 659–705 the composition is skewed to pro residues; it reads HQPPPLPPWLGGTPPPIFPQPPQTFPQPPPTFPQPPPTFQQPPPACP.

In terms of assembly, homodimer. Found in a multi-helicase-TICAM1 complex at least composed of DHX36, DDX1, DDX21 and TICAM1; this complex exists in resting cells with or without poly(I:C) RNA ligand stimulation. Interacts (via TIR domain) with DDX21 (via C-terminus). Interacts (via TIR domain) with DHX36 (via C-terminus). Interacts with AZI2 and IRF7. Interacts with TICAM2 in TLR4 recruitment. Interaction with PIAS4 inhibits the TICAM1-induced NF-kappa-B, IRF and IFNB1 activation. Interacts with IKBKB and IKBKE. Interaction with SARM1 blocks TICAM1-dependent transcription factor activation. Interacts with TRAF3. Interacts (when phosphorylated) with IRF3; following activation and phosphorylation on the pLxIS motif by TBK1, recruits IRF3. Interacts with TBK1, TRAF6 and RIPK1 and these interactions are enhanced in the presence of WDFY1. Interacts with TRAFD1. Interacts with UBQLN1 (via UBA domain). Interacts with TLR4 in response to LPS in a WDFY1-dependent manner. Interacts with WDFY1 in response to poly(I:C). Interacts (via the TIR domain) with TLR3 in response to poly(I:C) and this interaction is enhanced in the presence of WDFY1. Interacts with TRIM56. Component of a multi-helicase-TICAM1 complex that acts as a cytoplasmic sensor of viral double-stranded RNA (dsRNA) and plays a role in the activation of a cascade of antiviral responses including the induction of pro-inflammatory cytokines. Interacts (via the TIR domain) with TLR5. Interacts with TRIM8. Interacts with TAX1BP1 and TRIM32; these interactions target TICAM1 to TAX1BP1-mediated selective autophagic degradation. Interacts with DDX50. Phosphorylated by TBK1. Following activation, phosphorylated by TBK1 at Ser-210 in the pLxIS motif. The phosphorylated pLxIS motif constitutes an IRF3-binding motif, leading to recruitment of the transcription factor IRF3 to induce type-I interferons and other cytokines. Post-translationally, polyubiquitinated at Lys-229 by TRIM38 with 'Lys-48'-linked chains, leading to proteasomal degradation. Polyubiquitinated with 'Lys-6' and 'Lys-33'-linked chains in a TRIM8-dependent manner.

The protein resides in the cytoplasmic vesicle. The protein localises to the autophagosome. It localises to the cytoplasm. It is found in the cytosol. Its subcellular location is the mitochondrion. In terms of biological role, involved in innate immunity against invading pathogens. Adapter used by TLR3, TLR4 (through TICAM2) and TLR5 to mediate NF-kappa-B and interferon-regulatory factor (IRF) activation, and to induce apoptosis. Ligand binding to these receptors results in TRIF recruitment through its TIR domain. Distinct protein-interaction motifs allow recruitment of the effector proteins TBK1, TRAF6 and RIPK1, which in turn, lead to the activation of transcription factors IRF3 and IRF7, NF-kappa-B and FADD respectively. Phosphorylation by TBK1 on the pLxIS motif leads to recruitment and subsequent activation of the transcription factor IRF3 to induce expression of type I interferon and exert a potent immunity against invading pathogens. Component of a multi-helicase-TICAM1 complex that acts as a cytoplasmic sensor of viral double-stranded RNA (dsRNA) and plays a role in the activation of a cascade of antiviral responses including the induction of pro-inflammatory cytokines. This chain is TIR domain-containing adapter molecule 1 (TICAM1), found in Bos taurus (Bovine).